The following is a 410-amino-acid chain: F-box/WD repeat-containing protein 4 (410 aa).

The F-box domain maps to 23–69 (GPALWRLPEELLLLICSYLDTRALGRLAQVCRWLRRFTSCDLLWRPI). 4 WD repeats span residues 159–196 (GHDEDVCHFVLANSHIVSAGGDGKIGVHKIHSTFTVKY), 198–235 (AHEQEVNCVDCKGGIIVSGSRDRTAKVWPLASGRLGQC), 289–327 (PPGAGVLDVMYESPSTLLSCGYDTYVRYWDLRTSTRKCV), and 333–372 (PHDSTFYCLQTDGNHLLATGSSYYGLVRLWDRRQRACLHA).

In terms of assembly, part of a SCF (SKP1-cullin-F-box) protein ligase complex. Interacts with POUF51.

Functionally, probably recognizes and binds to some phosphorylated proteins and promotes their ubiquitination and degradation. Likely to be involved in key signaling pathways crucial for normal limb development. May participate in Wnt signaling. This is F-box/WD repeat-containing protein 4 (Fbxw4) from Mus musculus (Mouse).